The chain runs to 90 residues: UPF0335 protein RPB_1426 (90 aa).

It belongs to the UPF0335 family.

The polypeptide is UPF0335 protein RPB_1426 (Rhodopseudomonas palustris (strain HaA2)).